We begin with the raw amino-acid sequence, 1154 residues long: MVYPVQCGPRERWTFARIQEVMDMPNLIEIQQNSYRWFLEEGLREMFRDISPIQDFTGNLILEFIDYALGEPKYSVEECKERDVTFAAPLRVKVRLINKETGEVKEQEVFMGDFPLMTDKGTFIINGAERVIVSQLVRSPGVYYNEAIDPPSGKKLFGATIIPNRGAWLEFETDINDNIFVRIDRTRKLPATVLIRALGYSNNAQVQELFDGDERIRITLERDNTENTEEALVEIYKRLRPGEPPTVDSARSLLETLFFDPKRYDLAKVGRYKINKRLGISVEREVRHLTKDDIIAAIRELLKLMQGDGRADDIDHLGNRRLRSVGELLQNQFRIGLSRMERVVRERMTIQDVEVITPQVLINIRPVVAAIKEFFGSSQLSQFMDQTNPLAELTHKRRLSALGPGGLSRERAGFEVRDVHHSHYGRMCPIETPEGPNIGLIGSLSTFARINEYGFIETPYRKVDKERGVVTDQIDYLTADEEDKYIVAQANAPLDEEGRFKEKRVNARHGHDILVVPVEKVDYMDVSPKQVVSIATALIPFLEHDDANRALMGANMQRQAVPLLRTDAPYVGTGMEFKAAYDSGVCAIARKAGYVERVTGDEILIRCDDGTTEHHKLLKFLRSNQGTCINQKPICHKGQRIEAGQIIADGPSTDQGELALGRNVLVAFMTWEGYNYEDAILVNEKLVKEDYFTSIHIEEYECDSRDTKLGPEEITRDIPNVGEEVLKDLDDRGIIRVGAEVRPGDILVGKVTPKGETELTAEERLLRAIFGEKAREVRDTSLRVPHGEAGKIVDVKVFSRENGDELAPGVNQLVRVYIAQKRKISEGDKMAGRHGNKGVISRIMPEADMPYLPDGTPVEIVLNPLGVPSRMNIGQILETHLGWASKHMDRGVLIEGKPSGEKGIRVATPVFDGATEDDIFEFLTKAGLPKANEIALTDTRTESLRESMAAVPLGKSILYDGRTGEPFDNPITVGYMYMLKLAHLVDDKIHARSTGPYSLVTQQPLGGKAQFGGQRFGEMEVWALEAYGAAYTLQEILTVKSDDVVGRVKTYEAIVKGENIPEPGVPESFKVLIKELQSLGLDVKILSEDEREIEIKEVEEDVAETAKELGIDIQGEDRSERAGEPASPDEMDDEEEIDYAAGFLQDALEELEED.

Residues 1108–1123 are compositionally biased toward basic and acidic residues; that stretch reads ELGIDIQGEDRSERAG. The segment at 1108 to 1136 is disordered; it reads ELGIDIQGEDRSERAGEPASPDEMDDEEE. The segment covering 1127–1136 has biased composition (acidic residues); that stretch reads SPDEMDDEEE.

This sequence belongs to the RNA polymerase beta chain family. The RNAP catalytic core consists of 2 alpha, 1 beta, 1 beta' and 1 omega subunit. When a sigma factor is associated with the core the holoenzyme is formed, which can initiate transcription.

It catalyses the reaction RNA(n) + a ribonucleoside 5'-triphosphate = RNA(n+1) + diphosphate. Its function is as follows. DNA-dependent RNA polymerase catalyzes the transcription of DNA into RNA using the four ribonucleoside triphosphates as substrates. This Heliobacterium modesticaldum (strain ATCC 51547 / Ice1) protein is DNA-directed RNA polymerase subunit beta.